The following is a 294-amino-acid chain: Cytidine deaminase (294 aa).

CMP/dCMP-type deaminase domains follow at residues 48–168 (DDDA…FGPK) and 187–294 (ALTD…RITF). 89–91 (NME) lines the substrate pocket. His102 lines the Zn(2+) pocket. Glu104 serves as the catalytic Proton donor. Residues Cys129 and Cys132 each coordinate Zn(2+).

The protein belongs to the cytidine and deoxycytidylate deaminase family. Homodimer. Zn(2+) serves as cofactor.

It carries out the reaction cytidine + H2O + H(+) = uridine + NH4(+). It catalyses the reaction 2'-deoxycytidine + H2O + H(+) = 2'-deoxyuridine + NH4(+). Its function is as follows. This enzyme scavenges exogenous and endogenous cytidine and 2'-deoxycytidine for UMP synthesis. The chain is Cytidine deaminase from Serratia proteamaculans (strain 568).